The following is a 777-amino-acid chain: UPF0313 protein VP1980 (777 aa).

One can recognise a Radical SAM core domain in the interval 363–642 (AYDMIKTSVN…KALLRYHDPA (280 aa)). [4Fe-4S] cluster-binding residues include C377, C381, and C384. The disordered stretch occupies residues 675–777 (AQTPAQRRKS…PAGQRKPKRR (103 aa)). The segment covering 680–698 (QRRKSGRHGANRFATKHTK) has biased composition (basic residues). The segment covering 709-719 (KRAEGGSKDGK) has biased composition (basic and acidic residues). Polar residues predominate over residues 736 to 747 (PASNGQRPSGNG). Residues 755–769 (KPQGQGRPQGQGKPA) are compositionally biased toward low complexity.

This sequence belongs to the UPF0313 family. Requires [4Fe-4S] cluster as cofactor.

This Vibrio parahaemolyticus serotype O3:K6 (strain RIMD 2210633) protein is UPF0313 protein VP1980.